The sequence spans 579 residues: 2-succinyl-5-enolpyruvyl-6-hydroxy-3-cyclohexene-1-carboxylate synthase (579 aa).

This sequence belongs to the TPP enzyme family. MenD subfamily. In terms of assembly, homodimer. Mg(2+) is required as a cofactor. It depends on Mn(2+) as a cofactor. Requires thiamine diphosphate as cofactor.

It carries out the reaction isochorismate + 2-oxoglutarate + H(+) = 5-enolpyruvoyl-6-hydroxy-2-succinyl-cyclohex-3-ene-1-carboxylate + CO2. It participates in quinol/quinone metabolism; 1,4-dihydroxy-2-naphthoate biosynthesis; 1,4-dihydroxy-2-naphthoate from chorismate: step 2/7. It functions in the pathway quinol/quinone metabolism; menaquinone biosynthesis. Functionally, catalyzes the thiamine diphosphate-dependent decarboxylation of 2-oxoglutarate and the subsequent addition of the resulting succinic semialdehyde-thiamine pyrophosphate anion to isochorismate to yield 2-succinyl-5-enolpyruvyl-6-hydroxy-3-cyclohexene-1-carboxylate (SEPHCHC). The chain is 2-succinyl-5-enolpyruvyl-6-hydroxy-3-cyclohexene-1-carboxylate synthase from Shewanella frigidimarina (strain NCIMB 400).